The chain runs to 181 residues: Adenylate kinase (181 aa).

Residue 10–15 (GAGKGT) participates in ATP binding. Residues 30 to 59 (STGDLFRDNITNETELGVEAKRYLDAGDLV) are NMP. AMP contacts are provided by residues Thr31, Arg36, 57-59 (DLV), 85-88 (GYPR), and Gln92. The segment at 126–132 (GRGRADD) is LID. Arg127 is an ATP binding site. Arg129 and Arg140 together coordinate AMP. Gly166 contributes to the ATP binding site.

Belongs to the adenylate kinase family. In terms of assembly, monomer.

Its subcellular location is the cytoplasm. The enzyme catalyses AMP + ATP = 2 ADP. It participates in purine metabolism; AMP biosynthesis via salvage pathway; AMP from ADP: step 1/1. In terms of biological role, catalyzes the reversible transfer of the terminal phosphate group between ATP and AMP. Plays an important role in cellular energy homeostasis and in adenine nucleotide metabolism. The sequence is that of Adenylate kinase from Mycobacterium sp. (strain MCS).